Consider the following 213-residue polypeptide: Imidazole glycerol phosphate synthase subunit HisH (213 aa).

The Glutamine amidotransferase type-1 domain occupies 4-211 (NLGVIDYGMG…LHWLHQGAEP (208 aa)). Residue Cys82 is the Nucleophile of the active site. Residues His186 and Glu188 contribute to the active site.

In terms of assembly, heterodimer of HisH and HisF.

It is found in the cytoplasm. The catalysed reaction is 5-[(5-phospho-1-deoxy-D-ribulos-1-ylimino)methylamino]-1-(5-phospho-beta-D-ribosyl)imidazole-4-carboxamide + L-glutamine = D-erythro-1-(imidazol-4-yl)glycerol 3-phosphate + 5-amino-1-(5-phospho-beta-D-ribosyl)imidazole-4-carboxamide + L-glutamate + H(+). It carries out the reaction L-glutamine + H2O = L-glutamate + NH4(+). The protein operates within amino-acid biosynthesis; L-histidine biosynthesis; L-histidine from 5-phospho-alpha-D-ribose 1-diphosphate: step 5/9. Its function is as follows. IGPS catalyzes the conversion of PRFAR and glutamine to IGP, AICAR and glutamate. The HisH subunit catalyzes the hydrolysis of glutamine to glutamate and ammonia as part of the synthesis of IGP and AICAR. The resulting ammonia molecule is channeled to the active site of HisF. This is Imidazole glycerol phosphate synthase subunit HisH from Synechococcus sp. (strain CC9902).